A 31-amino-acid chain; its full sequence is Photosystem II reaction center protein T (31 aa).

Methionine 1 bears the N-formylmethionine mark. The helical transmembrane segment at 3-23 (SVAYILVLTMALAVLFFAIAF) threads the bilayer.

The protein belongs to the PsbT family. In terms of assembly, PSII is composed of 1 copy each of membrane proteins PsbA, PsbB, PsbC, PsbD, PsbE, PsbF, PsbH, PsbI, PsbJ, PsbK, PsbL, PsbM, PsbT, PsbX, PsbY, PsbZ, Psb30/Ycf12, peripheral proteins PsbO, CyanoQ (PsbQ), PsbU, PsbV and a large number of cofactors. It forms dimeric complexes.

The protein localises to the cellular thylakoid membrane. In terms of biological role, found at the monomer-monomer interface of the photosystem II (PS II) dimer, plays a role in assembly and dimerization of PSII. PSII is a light-driven water plastoquinone oxidoreductase, using light energy to abstract electrons from H(2)O, generating a proton gradient subsequently used for ATP formation. This chain is Photosystem II reaction center protein T, found in Synechocystis sp. (strain ATCC 27184 / PCC 6803 / Kazusa).